An 833-amino-acid chain; its full sequence is Copper-exporting P-type ATPase (833 aa).

HMA domains are found at residues 3 to 64 and 98 to 161; these read QTID…YGAT and ESQQ…YGAE. 4 residues coordinate Cu(+): Cys14, Cys17, Cys109, and Cys112. Helical transmembrane passes span 186-206, 217-237, 253-273, 283-303, 437-457, and 463-483; these read WQAI…MIGD, LWLA…GHFY, TLVA…NLWP, LYYE…MLEA, AVFV…WYFF, and IVYT…CALG. Asp522 acts as the 4-aspartylphosphate intermediate in catalysis. Residues Asp719 and Asp723 each coordinate Mg(2+). Transmembrane regions (helical) follow at residues 778–798 and 800–820; these read LGAF…LWPF and GTLL…ITVV.

The protein belongs to the cation transport ATPase (P-type) (TC 3.A.3) family. Type IB subfamily.

The protein localises to the cell inner membrane. It is found in the cytoplasm. The enzyme catalyses Cu(+)(in) + ATP + H2O = Cu(+)(out) + ADP + phosphate + H(+). In terms of biological role, involved in Cu(+) export. Essential for copper tolerance under both aerobic and anaerobic conditions. Its function is as follows. Probably also encodes a cytoplasmic copper chaperone CopA(Z) that is produced by programmed ribosomal frameshifting. In Salmonella typhimurium (strain LT2 / SGSC1412 / ATCC 700720), this protein is Copper-exporting P-type ATPase (copA).